The following is a 319-amino-acid chain: HTH-type transcriptional regulator YidZ (319 aa).

Residues 8 to 65 (LDLNLLLCLQLLMQERSVTKAAKRMNVTPSAVSKSLAKLRAWFDDPLFVNSPLGLSPT) form the HTH lysR-type domain. The H-T-H motif DNA-binding region spans 25 to 44 (VTKAAKRMNVTPSAVSKSLA).

Belongs to the LysR transcriptional regulatory family.

In terms of biological role, involved in anaerobic NO protection. This Escherichia coli O157:H7 (strain EC4115 / EHEC) protein is HTH-type transcriptional regulator YidZ.